The chain runs to 585 residues: Aspartate--tRNA ligase (585 aa).

Position 169 (Glu-169) interacts with L-aspartate. Residues 193-196 (QLFK) form an aspartate region. Arg-215 is an L-aspartate binding site. ATP-binding positions include 215-217 (RDE) and Gln-224. An L-aspartate-binding site is contributed by His-443. Glu-478 contributes to the ATP binding site. L-aspartate is bound at residue Arg-485. 530 to 533 (GLDR) contacts ATP.

Belongs to the class-II aminoacyl-tRNA synthetase family. Type 1 subfamily. As to quaternary structure, homodimer.

The protein resides in the cytoplasm. The catalysed reaction is tRNA(Asp) + L-aspartate + ATP = L-aspartyl-tRNA(Asp) + AMP + diphosphate. Catalyzes the attachment of L-aspartate to tRNA(Asp) in a two-step reaction: L-aspartate is first activated by ATP to form Asp-AMP and then transferred to the acceptor end of tRNA(Asp). This Pseudothermotoga lettingae (strain ATCC BAA-301 / DSM 14385 / NBRC 107922 / TMO) (Thermotoga lettingae) protein is Aspartate--tRNA ligase.